The chain runs to 135 residues: uncharacterized protein (135 aa).

This is an uncharacterized protein from Acanthamoeba polyphaga (Amoeba).